The primary structure comprises 270 residues: Flavin-dependent thymidylate synthase (270 aa).

The region spanning 13 to 218 (GFVRLVDQMG…PLAWAAFEEH (206 aa)) is the ThyX domain. Residues S59, 82–84 (RHR), and E90 contribute to the FAD site. Residues 79 to 82 (QWFR), 90 to 94 (EISGR), and R157 each bind dUMP. A ThyX motif motif is present at residues 82 to 92 (RHRTASVNEIS). Residues 173 to 175 (DLH) and H179 contribute to the FAD site. R184 provides a ligand contact to dUMP. R184 functions as the Involved in ionization of N3 of dUMP, leading to its activation in the catalytic mechanism.

This sequence belongs to the thymidylate synthase ThyX family. As to quaternary structure, homotetramer. It depends on FAD as a cofactor.

The enzyme catalyses dUMP + (6R)-5,10-methylene-5,6,7,8-tetrahydrofolate + NADPH + H(+) = dTMP + (6S)-5,6,7,8-tetrahydrofolate + NADP(+). The protein operates within pyrimidine metabolism; dTTP biosynthesis. Catalyzes the reductive methylation of 2'-deoxyuridine-5'-monophosphate (dUMP) to 2'-deoxythymidine-5'-monophosphate (dTMP) while utilizing 5,10-methylenetetrahydrofolate (mTHF) as the methyl donor, and NADPH and FADH(2) as the reductant. The sequence is that of Flavin-dependent thymidylate synthase from Thermus thermophilus (strain ATCC BAA-163 / DSM 7039 / HB27).